The following is a 165-amino-acid chain: 2-C-methyl-D-erythritol 2,4-cyclodiphosphate synthase (165 aa).

The a divalent metal cation site is built by aspartate 11 and histidine 13. 4-CDP-2-C-methyl-D-erythritol 2-phosphate contacts are provided by residues 11–13 (DVH) and 40–41 (HS). Histidine 48 contributes to the a divalent metal cation binding site. 4-CDP-2-C-methyl-D-erythritol 2-phosphate-binding positions include 62–64 (DIG), 67–71 (FPDTD), 137–140 (TTSE), phenylalanine 144, and arginine 147.

It belongs to the IspF family. In terms of assembly, homotrimer. A divalent metal cation is required as a cofactor.

It catalyses the reaction 4-CDP-2-C-methyl-D-erythritol 2-phosphate = 2-C-methyl-D-erythritol 2,4-cyclic diphosphate + CMP. Its pathway is isoprenoid biosynthesis; isopentenyl diphosphate biosynthesis via DXP pathway; isopentenyl diphosphate from 1-deoxy-D-xylulose 5-phosphate: step 4/6. In terms of biological role, involved in the biosynthesis of isopentenyl diphosphate (IPP) and dimethylallyl diphosphate (DMAPP), two major building blocks of isoprenoid compounds. Catalyzes the conversion of 4-diphosphocytidyl-2-C-methyl-D-erythritol 2-phosphate (CDP-ME2P) to 2-C-methyl-D-erythritol 2,4-cyclodiphosphate (ME-CPP) with a corresponding release of cytidine 5-monophosphate (CMP). This Rubrobacter xylanophilus (strain DSM 9941 / JCM 11954 / NBRC 16129 / PRD-1) protein is 2-C-methyl-D-erythritol 2,4-cyclodiphosphate synthase.